Consider the following 409-residue polypeptide: Phosphatidylglycerol--prolipoprotein diacylglyceryl transferase (409 aa).

Helical transmembrane passes span 18–38 (PVPL…AVFV), 48–68 (MDPM…IVGA), 93–113 (IWNG…GAWL), and 119–139 (GISL…AQAI). Arg141 serves as a coordination point for a 1,2-diacyl-sn-glycero-3-phospho-(1'-sn-glycerol). 2 helical membrane-spanning segments follow: residues 177-197 (QPTF…LLVV) and 234-254 (ILGL…ALLA). Residues 273 to 409 (ALGIARSRPA…AVPPEEPQLP (137 aa)) are disordered. 3 stretches are compositionally biased toward low complexity: residues 297–309 (AAAP…DSAA), 320–335 (PDLG…SAGS), and 348–375 (TATT…TATT).

It belongs to the Lgt family.

The protein localises to the cell membrane. It carries out the reaction L-cysteinyl-[prolipoprotein] + a 1,2-diacyl-sn-glycero-3-phospho-(1'-sn-glycerol) = an S-1,2-diacyl-sn-glyceryl-L-cysteinyl-[prolipoprotein] + sn-glycerol 1-phosphate + H(+). It functions in the pathway protein modification; lipoprotein biosynthesis (diacylglyceryl transfer). Functionally, catalyzes the transfer of the diacylglyceryl group from phosphatidylglycerol to the sulfhydryl group of the N-terminal cysteine of a prolipoprotein, the first step in the formation of mature lipoproteins. In Frankia casuarinae (strain DSM 45818 / CECT 9043 / HFP020203 / CcI3), this protein is Phosphatidylglycerol--prolipoprotein diacylglyceryl transferase.